We begin with the raw amino-acid sequence, 355 residues long: tRNA uridine(34) hydroxylase (355 aa).

Positions Lys-146–Leu-240 constitute a Rhodanese domain. Cys-200 serves as the catalytic Cysteine persulfide intermediate.

It belongs to the TrhO family.

It catalyses the reaction uridine(34) in tRNA + AH2 + O2 = 5-hydroxyuridine(34) in tRNA + A + H2O. Its function is as follows. Catalyzes oxygen-dependent 5-hydroxyuridine (ho5U) modification at position 34 in tRNAs. This is tRNA uridine(34) hydroxylase from Hamiltonella defensa subsp. Acyrthosiphon pisum (strain 5AT).